Consider the following 1365-residue polypeptide: Glucosyltransferase-S (1365 aa).

Positions 1 to 36 (MEKNLRYKLHKVKKQWVAIGVTTVTLSFLAGGQVVA) form a signal peptide, or 37. 2 stretches are compositionally biased toward polar residues: residues 80-89 (DQTATSQVSP) and 127-146 (RQSA…TSDQ). 2 disordered regions span residues 80–99 (DQTA…DNQV) and 127–152 (RQSA…HLET). Cell wall-binding repeat units lie at residues 146 to 166 (QPGH…NGQR) and 168 to 187 (KNYS…QTGE). The catalytic; approximate stretch occupies residues 200–1000 (QDNVPDSYQA…KPIDPSVKIT (801 aa)). Cell wall-binding repeat units lie at residues 1052–1071 (ANGF…NGQE), 1073–1092 (KNRF…DGKM), 1093–1112 (ATGK…NGKQ), 1113–1133 (LKEG…NGRT), 1136–1159 (NKGF…DGTI), 1160–1179 (AIGL…YGYQ), 1234–1253 (LTGE…NGVQ), 1278–1298 (GKGW…SGQV), 1299–1318 (LTGL…KGIQ), and 1343–1362 (RDRW…NGLA).

The protein belongs to the glycosyl hydrolase 70 family.

It carries out the reaction [(1-&gt;6)-alpha-D-glucosyl](n) + sucrose = [(1-&gt;6)-alpha-D-glucosyl](n+1) + D-fructose. Glucan synthesis by GTF-S is independent of primer glucan unlike GTF-I. Functionally, production of extracellular glucans, that are thought to play a key role in the development of the dental plaque because of their ability to adhere to smooth surfaces and mediate the aggregation of bacterial cells and food debris. The protein is Glucosyltransferase-S (gtfS) of Streptococcus downei (Streptococcus sobrinus).